The chain runs to 224 residues: 7-cyano-7-deazaguanine synthase (224 aa).

10-20 lines the ATP pocket; sequence LSGGLDSATVV. Zn(2+) is bound by residues Cys-189, Cys-199, Cys-202, and Cys-205.

Belongs to the QueC family. Zn(2+) is required as a cofactor.

It catalyses the reaction 7-carboxy-7-deazaguanine + NH4(+) + ATP = 7-cyano-7-deazaguanine + ADP + phosphate + H2O + H(+). The protein operates within purine metabolism; 7-cyano-7-deazaguanine biosynthesis. Functionally, catalyzes the ATP-dependent conversion of 7-carboxy-7-deazaguanine (CDG) to 7-cyano-7-deazaguanine (preQ(0)). The protein is 7-cyano-7-deazaguanine synthase of Ectopseudomonas mendocina (strain ymp) (Pseudomonas mendocina).